The following is a 96-amino-acid chain: NADH-ubiquinone oxidoreductase chain 4L (96 aa).

Transmembrane regions (helical) follow at residues 2–22 (IMFLYSSFSMILFILGLFCFV), 28–48 (LLSMLLSLEFIVLILFFMLFI), and 62–82 (MFLTFSVCEGALGLSILVSMI).

Belongs to the complex I subunit 4L family.

It localises to the mitochondrion membrane. It catalyses the reaction a ubiquinone + NADH + 5 H(+)(in) = a ubiquinol + NAD(+) + 4 H(+)(out). Functionally, core subunit of the mitochondrial membrane respiratory chain NADH dehydrogenase (Complex I) that is believed to belong to the minimal assembly required for catalysis. Complex I functions in the transfer of electrons from NADH to the respiratory chain. The immediate electron acceptor for the enzyme is believed to be ubiquinone. This Drosophila nasuta F (Fruit fly) protein is NADH-ubiquinone oxidoreductase chain 4L (mt:ND4L).